Reading from the N-terminus, the 325-residue chain is Helicase VP6-A (325 aa).

2 disordered regions span residues 1 to 126 (MLLA…TNGR) and 175 to 231 (GVAE…PARI). Composition is skewed to basic and acidic residues over residues 8–18 (VIKRSSEELKQ), 32–54 (EGGKEDKTEPKEESKAEGSKDGE), 61–79 (GQKEEGGKETKDADVDRRI), and 92–105 (PGERANENADRGDG). An ATP-binding site is contributed by Lys106. A compositionally biased stretch (gly residues) spans 106-122 (KVGGGGGDADAGVGATG). A compositionally biased stretch (basic and acidic residues) spans 175-229 (GVAEQTERLRDLRRKEKNGTHAKAVERGGRKQRKESHGDAQREGVEEEKTSEEPA).

This sequence belongs to the orbivirus VP6 family. As to quaternary structure, homohexamer.

It is found in the virion. It catalyses the reaction ATP + H2O = ADP + phosphate + H(+). Its function is as follows. ATP dependent RNA helicase essential for RNA packaging and viral transcription. Possesses ss- and dsRNA-binding capacity. The polypeptide is Helicase VP6-A (Segment-9) (Bluetongue virus 11 (isolate USA) (BTV 11)).